A 185-amino-acid polypeptide reads, in one-letter code: Putative manganese efflux pump MntP (185 aa).

6 helical membrane-spanning segments follow: residues 6–26 (IFII…ACGL), 41–61 (FHFG…GLTV), 65–85 (VETY…GKMI), 107–127 (LVFL…SFSI), 132–152 (IAFP…FGLW), and 164–184 (SHIA…KLLL).

Belongs to the MntP (TC 9.B.29) family.

The protein resides in the cell inner membrane. Its function is as follows. Probably functions as a manganese efflux pump. The protein is Putative manganese efflux pump MntP of Maridesulfovibrio salexigens (strain ATCC 14822 / DSM 2638 / NCIMB 8403 / VKM B-1763) (Desulfovibrio salexigens).